The primary structure comprises 101 residues: Enhancer of yellow 2 transcription factor (101 aa).

The protein belongs to the ENY2 family. Component of the nuclear pore complex (NPC)-associated AMEX complex (anchoring and mRNA export complex), composed of at least e(y)2 and xmas-2. Component of the SAGA transcription coactivator-HAT complexes, at least composed of Ada2b, e(y)2, Pcaf/Gcn5, Taf10 and Nipped-A/Trrap. Within the SAGA complex, e(y)2, Sgf11, and not/nonstop form an additional subcomplex of SAGA called the DUB module (deubiquitination module). Component of the THO complex, composed of at least e(y)2, HPR1, THO2, THOC5, THOC6 and THOC7. Interacts with e(y)1. Interacts with su(Hw) (via zinc fingers). Interacts with xmas-2; required for localization to the nuclear periphery. Interacts with the nuclear pore complex (NPC).

The protein resides in the nucleus. It is found in the nucleoplasm. The protein localises to the cytoplasm. In terms of biological role, involved in mRNA export coupled transcription activation by association with both the AMEX and the SAGA complexes. The SAGA complex is a multiprotein complex that activates transcription by remodeling chromatin and mediating histone acetylation and deubiquitination. Within the SAGA complex, participates in a subcomplex that specifically deubiquitinates histone H2B. The SAGA complex is recruited to specific gene promoters by activators, where it is required for transcription. Required for nuclear receptor-mediated transactivation. Involved in transcription elongation by recruiting the THO complex onto nascent mRNA. The AMEX complex functions in docking export-competent ribonucleoprotein particles (mRNPs) to the nuclear entrance of the nuclear pore complex (nuclear basket). AMEX participates in mRNA export and accurate chromatin positioning in the nucleus by tethering genes to the nuclear periphery. This chain is Enhancer of yellow 2 transcription factor, found in Drosophila yakuba (Fruit fly).